We begin with the raw amino-acid sequence, 205 residues long: High frequency lysogenization protein HflD homolog (205 aa).

The protein belongs to the HflD family.

It is found in the cytoplasm. The protein localises to the cell inner membrane. The polypeptide is High frequency lysogenization protein HflD homolog (Vibrio campbellii (strain ATCC BAA-1116)).